The chain runs to 142 residues: Large ribosomal subunit protein uL11 (142 aa).

This sequence belongs to the universal ribosomal protein uL11 family. As to quaternary structure, part of the ribosomal stalk of the 50S ribosomal subunit. Interacts with L10 and the large rRNA to form the base of the stalk. L10 forms an elongated spine to which L12 dimers bind in a sequential fashion forming a multimeric L10(L12)X complex. Post-translationally, one or more lysine residues are methylated.

In terms of biological role, forms part of the ribosomal stalk which helps the ribosome interact with GTP-bound translation factors. The sequence is that of Large ribosomal subunit protein uL11 from Mycobacteroides abscessus (strain ATCC 19977 / DSM 44196 / CCUG 20993 / CIP 104536 / JCM 13569 / NCTC 13031 / TMC 1543 / L948) (Mycobacterium abscessus).